Here is a 221-residue protein sequence, read N- to C-terminus: Small ribosomal subunit protein uS4c (221 aa).

The disordered stretch occupies residues 26-53; the sequence is RKRTDNRCMPGQHRKKRNDSTKKTKNSK. Residues 37-53 show a composition bias toward basic residues; sequence QHRKKRNDSTKKTKNSK. Residues 103–161 form the S4 RNA-binding domain; it reads MRLDNIVFRLGMAPTIPAARQLVNHGHIVVNNKKVDISSYQCQSQDVISVTKNKTIRTL.

The protein belongs to the universal ribosomal protein uS4 family. Part of the 30S ribosomal subunit. Contacts protein S5. The interaction surface between S4 and S5 is involved in control of translational fidelity.

The protein resides in the plastid. The protein localises to the chloroplast. Its function is as follows. One of the primary rRNA binding proteins, it binds directly to 16S rRNA where it nucleates assembly of the body of the 30S subunit. With S5 and S12 plays an important role in translational accuracy. This is Small ribosomal subunit protein uS4c (rps4) from Pleurastrum terricola (Filamentous green alga).